The sequence spans 307 residues: UDP-N-acetylenolpyruvoylglucosamine reductase (307 aa).

One can recognise an FAD-binding PCMH-type domain in the interval threonine 34–glycine 198. The active site involves arginine 177. Catalysis depends on serine 227, which acts as the Proton donor. Residue glutamate 297 is part of the active site.

It belongs to the MurB family. It depends on FAD as a cofactor.

The protein localises to the cytoplasm. It carries out the reaction UDP-N-acetyl-alpha-D-muramate + NADP(+) = UDP-N-acetyl-3-O-(1-carboxyvinyl)-alpha-D-glucosamine + NADPH + H(+). The protein operates within cell wall biogenesis; peptidoglycan biosynthesis. Functionally, cell wall formation. This is UDP-N-acetylenolpyruvoylglucosamine reductase from Staphylococcus haemolyticus (strain JCSC1435).